Consider the following 173-residue polypeptide: Cytochrome c homolog (173 aa).

The Cytoplasmic segment spans residues 1 to 8; it reads MSGKELNK. A helical; Signal-anchor transmembrane segment spans residues 9–29; it reads IVAAILFASLIAMMVGFIANI. Residues 30–173 lie on the Periplasmic side of the membrane; sequence LYKPVLEPKH…LFLKTYVHDK (144 aa). Heme c is bound by residues cysteine 82, cysteine 85, histidine 86, and methionine 148.

It belongs to the cytochrome c family. Post-translationally, binds 1 heme c group covalently per subunit.

The protein resides in the cell membrane. May be involved in electron transfer from bc1 complex to aa3. The polypeptide is Cytochrome c homolog (cycM) (Rickettsia bellii (strain RML369-C)).